The following is a 97-amino-acid chain: DNA/RNA-binding protein Alba (97 aa).

Lys15 is modified (N6-acetyllysine).

This sequence belongs to the histone-like Alba family. In terms of processing, acetylated. Acetylation at Lys-15 decreases DNA-binding affinity.

It is found in the cytoplasm. Its subcellular location is the chromosome. Its function is as follows. Binds double-stranded DNA tightly but without sequence specificity. Involved in DNA compaction. This is DNA/RNA-binding protein Alba from Ignicoccus hospitalis (strain KIN4/I / DSM 18386 / JCM 14125).